The chain runs to 1029 residues: Protein STABILIZED1 (1029 aa).

The region spanning 1 to 85 is the Ubiquitin-like domain; the sequence is MVFLSIPNGK…VIIHVLLLGG (85 aa). G85 is covalently cross-linked (Glycyl lysine isopeptide (Gly-Lys) (interchain with K-? in acceptor proteins)). Positions 142-170 are disordered; it reads AAPGVGRGAGKPSEAEAEDDEEAEEKRYD. Residues 210–243 adopt a coiled-coil conformation; that stretch reads DSRRKDRREAKLKEEIEKYRASNPKITEQFADLK. 15 HAT repeats span residues 367–399, 401–431, 432–462, 463–494, 496–524, 526–554, 639–671, 673–705, 707–739, 741–772, 774–806, 808–840, 842–874, 876–908, and 940–972; these read YDRN…VEEV, GKIK…CRLA, NPED…KLEH, DVEN…LANE, DARI…LETY, ESKK…LEEA, GSIE…LEKS, GSRE…EKWL, GDVP…LEFE, KEPE…VERE, GNVE…LEER, KHLE…LEEK, NGLN…AELR, DNKR…MAPR, and KKVE…FELQ. The stretch at 625–658 is one TPR 1 repeat; that stretch reads KRTWVADADECKKRGSIETARAIYAHALSVFLTK. The TPR 2 repeat unit spans residues 794 to 827; it reads FKLWLMLGQLEERFKHLEQARKAYDTGLKHCPHC. A TPR 3 repeat occupies 926–959; the sequence is PHVTIAVAKLFWQDKKVEKARAWFERAVTVGPDI.

In terms of assembly, component of a pre-mRNA splicing complex. Interacts with ZOP1. Interacts with PRP31. Ubiquitous.

The protein localises to the nucleus. It is found in the cajal body. Its function is as follows. Pre-mRNA splicing factor required for splicing and for the turnover of unstable transcripts. May be a U5 snRNP-associated protein involved in the formation of U4/U6-U5 tri-snRNP. Involved in responses to abiotic stresses. Involved in microRNAs (miRNAs) biogenesis by functioning in primary miRNAs (pri-miRNAs) splicing. Required for DNA methylation and transcriptional silencing through the RNA-directed DNA methylation (RdDM) pathway. The protein is Protein STABILIZED1 (STA1) of Arabidopsis thaliana (Mouse-ear cress).